We begin with the raw amino-acid sequence, 344 residues long: Fructose-1,6-bisphosphatase class 1 (344 aa).

Positions 91, 110, 112, and 113 each coordinate Mg(2+). Substrate contacts are provided by residues 113–116 and asparagine 200; that span reads DGSS. Residue glutamate 272 coordinates Mg(2+).

Belongs to the FBPase class 1 family. As to quaternary structure, homotetramer. Requires Mg(2+) as cofactor.

The protein resides in the cytoplasm. It catalyses the reaction beta-D-fructose 1,6-bisphosphate + H2O = beta-D-fructose 6-phosphate + phosphate. It functions in the pathway carbohydrate biosynthesis; Calvin cycle. The protein is Fructose-1,6-bisphosphatase class 1 of Rhodopseudomonas palustris (strain BisB18).